The following is a 142-amino-acid chain: Large ribosomal subunit protein uL11 (142 aa).

The protein belongs to the universal ribosomal protein uL11 family. In terms of assembly, part of the ribosomal stalk of the 50S ribosomal subunit. Interacts with L10 and the large rRNA to form the base of the stalk. L10 forms an elongated spine to which L12 dimers bind in a sequential fashion forming a multimeric L10(L12)X complex. In terms of processing, one or more lysine residues are methylated.

In terms of biological role, forms part of the ribosomal stalk which helps the ribosome interact with GTP-bound translation factors. This chain is Large ribosomal subunit protein uL11, found in Thermobifida fusca (strain YX).